Reading from the N-terminus, the 887-residue chain is Translation initiation factor IF-2 (887 aa).

The interval 1-291 is disordered; the sequence is MTDQADTSER…RRRVERERKK (291 aa). Low complexity predominate over residues 58-117; the sequence is AAPAAAPAAAPAAAEEVAKKPVAAPEVKPAAPVEERPAPVAKAAPEVKAVPAPAPAAAPA. 4 stretches are compositionally biased toward basic and acidic residues: residues 148–178, 185–194, 201–215, and 267–276; these read SAREREGEDRRRAEEEARRFAEEDARREAER, AAEEASRHTA, RAAEEAKRRLDDDRP, and AFDDESERQR. The region spanning 385 to 553 is the tr-type G domain; sequence ARAPVVTVMG…TILLQAELLD (169 aa). The interval 394–401 is G1; the sequence is GHVDHGKT. Position 394–401 (394–401) interacts with GTP; it reads GHVDHGKT. Residues 419-423 are G2; that stretch reads GITQH. The tract at residues 441–444 is G3; that stretch reads DTPG. GTP-binding positions include 441 to 445 and 495 to 498; these read DTPGH and NKMD. A G4 region spans residues 495-498; the sequence is NKMD. Positions 531-533 are G5; sequence SAK.

The protein belongs to the TRAFAC class translation factor GTPase superfamily. Classic translation factor GTPase family. IF-2 subfamily.

The protein resides in the cytoplasm. Functionally, one of the essential components for the initiation of protein synthesis. Protects formylmethionyl-tRNA from spontaneous hydrolysis and promotes its binding to the 30S ribosomal subunits. Also involved in the hydrolysis of GTP during the formation of the 70S ribosomal complex. In Parvibaculum lavamentivorans (strain DS-1 / DSM 13023 / NCIMB 13966), this protein is Translation initiation factor IF-2.